The primary structure comprises 544 residues: Chaperonin GroEL (544 aa).

Residues 30–33, Lys-51, 87–91, Gly-415, and Asp-495 each bind ATP; these read TLGP and DGTTT.

Belongs to the chaperonin (HSP60) family. Forms a cylinder of 14 subunits composed of two heptameric rings stacked back-to-back. Interacts with the co-chaperonin GroES.

The protein resides in the cytoplasm. It carries out the reaction ATP + H2O + a folded polypeptide = ADP + phosphate + an unfolded polypeptide.. Its function is as follows. Together with its co-chaperonin GroES, plays an essential role in assisting protein folding. The GroEL-GroES system forms a nano-cage that allows encapsulation of the non-native substrate proteins and provides a physical environment optimized to promote and accelerate protein folding. This chain is Chaperonin GroEL, found in Neisseria meningitidis serogroup C (strain 053442).